The primary structure comprises 483 residues: Regulatory protein ViaA (483 aa).

Belongs to the ViaA family. In terms of assembly, homodimer. Interacts with RavA.

The protein resides in the cytoplasm. In terms of biological role, component of the RavA-ViaA chaperone complex, which may act on the membrane to optimize the function of some of the respiratory chains. ViaA stimulates the ATPase activity of RavA. This chain is Regulatory protein ViaA, found in Escherichia coli O9:H4 (strain HS).